Reading from the N-terminus, the 775-residue chain is Kazrin (775 aa).

The segment at A38–N66 is disordered. Residues G51–A64 show a composition bias toward low complexity. Residues A74–K256 are a coiled coil. The tract at residues R174–T333 is interaction with PPL. Residues Q290–E427 are disordered. 3 positions are modified to phosphoserine: S352, S367, and S387. Over residues S411–L422 the composition is skewed to polar residues. SAM domains lie at W446 to A511, D524 to V588, and W612 to F679. 2 disordered regions span residues R688 to L715 and R729 to C762. The segment covering S732 to Y742 has biased composition (basic and acidic residues).

It belongs to the kazrin family. Isoform 2, isoform 3 and isoform 4 interact with PPL N-terminus. Isoform 2, isoform 3 and isoform 4 are expressed in several cell lines including keratinocytes and bladder and epidermoid carcinoma (at protein level). Isoform 2, isoform 3 and isoform 4 are expressed in hair follicle and interfollicular epidermis (at protein level).

The protein resides in the cytoplasm. Its subcellular location is the cytoskeleton. It localises to the cell junction. The protein localises to the desmosome. It is found in the nucleus. Functionally, component of the cornified envelope of keratinocytes. May be involved in the interplay between adherens junctions and desmosomes. The function in the nucleus is not known. In Homo sapiens (Human), this protein is Kazrin.